The chain runs to 229 residues: Heptaprenylglyceryl phosphate synthase (229 aa).

Lys12 contacts sn-glycerol 1-phosphate. 2 residues coordinate Mg(2+): Asp14 and Ser40. Residues 159-164 (YLEYSG), Gly189, and 209-210 (GN) each bind sn-glycerol 1-phosphate.

The protein belongs to the GGGP/HepGP synthase family. Group I subfamily. Homodimer. The cofactor is Mg(2+).

It catalyses the reaction sn-glycerol 1-phosphate + all-trans-heptaprenyl diphosphate = 3-heptaprenyl-sn-glycero-1-phosphate + diphosphate. It functions in the pathway membrane lipid metabolism; glycerophospholipid metabolism. In terms of biological role, prenyltransferase that catalyzes in vivo the transfer of the heptaprenyl moiety of heptaprenyl pyrophosphate (HepPP; 35 carbon atoms) to the C3 hydroxyl of sn-glycerol-1-phosphate (G1P), producing heptaprenylglyceryl phosphate (HepGP). This reaction is an ether-bond-formation step in the biosynthesis of archaea-type G1P-based membrane lipids found in Bacillales. This is Heptaprenylglyceryl phosphate synthase from Bacillus cereus (strain ATCC 10987 / NRS 248).